We begin with the raw amino-acid sequence, 185 residues long: Ribosome-recycling factor (185 aa).

The interval Asn-136–Glu-159 is disordered.

The protein belongs to the RRF family.

The protein resides in the cytoplasm. Functionally, responsible for the release of ribosomes from messenger RNA at the termination of protein biosynthesis. May increase the efficiency of translation by recycling ribosomes from one round of translation to another. The polypeptide is Ribosome-recycling factor (Pelotomaculum thermopropionicum (strain DSM 13744 / JCM 10971 / SI)).